We begin with the raw amino-acid sequence, 487 residues long: L-tartrate/succinate antiporter (487 aa).

The Periplasmic portion of the chain corresponds to 1-9 (MKPSTEWWR). A helical transmembrane segment spans residues 10-30 (YLAPLAVIAIIALLPVPAGLE). The Cytoplasmic portion of the chain corresponds to 31-32 (NH). 2 helical membrane-spanning segments follow: residues 33–53 (TWLY…EPVP) and 54–74 (GAVV…WLLF). Topologically, residues 75 to 92 (SPEQLAQPGFKFTAKSLS) are cytoplasmic. The helical transmembrane segment at 93–113 (WAVSGFSNSVIWLIFAAFMFG) threads the bilayer. The Periplasmic portion of the chain corresponds to 114 to 136 (TGYEKTGLGRRIALILVKKMGHR). The chain crosses the membrane as a helical span at residues 137–157 (TLFLGYAVMFSELILAPVTPS). At 158 to 188 (NSARGAGIIYPIIRNLPPLYQSQPNDSSSRS) the chain is on the cytoplasmic side. A helical membrane pass occupies residues 189-209 (IGSYIMWMGIVADCVTSAIFL). At 210-235 (TAMAPNLLLIGLMKSASHATLSWGDW) the chain is on the periplasmic side. A helical membrane pass occupies residues 236–256 (FLGMLPLSILLVLLVPWLAYV). Residues 257-291 (LYPPVLKSGDQVPRWAETELQAMGPLCSREKRMLG) lie on the Cytoplasmic side of the membrane. The next 2 helical transmembrane spans lie at 292–312 (LMVG…AAMV) and 313–333 (GYSV…DIVS). Over 334–339 (NKAAWN) the chain is Cytoplasmic. Residues 340 to 360 (VFFWLASLITLATGLNNTGFI) traverse the membrane as a helical segment. The Periplasmic segment spans residues 361-369 (SWFGKLLAG). The chain crosses the membrane as a helical span at residues 370 to 390 (SLSGYSPTMVMVALIVVFYLL). The Cytoplasmic segment spans residues 391–392 (RY). Residues 393–413 (FFASATAYTSALAPMMIAAAL) form a helical membrane-spanning segment. Topologically, residues 414 to 417 (AMPE) are periplasmic. A helical membrane pass occupies residues 418 to 438 (IPLPVFCLMVGAAIGLGSILT). Residues 439-464 (PYATGPSPIYYGSGYLPTADYWRLGA) are Cytoplasmic-facing. A helical membrane pass occupies residues 465–485 (IFGLIFLVLLVITGLLWMPVV). Residues 486-487 (LL) are Periplasmic-facing.

Belongs to the SLC13A/DASS transporter (TC 2.A.47) family. DIT1 subfamily.

Its subcellular location is the cell inner membrane. It carries out the reaction (2R,3R)-tartrate(out) + succinate(in) = (2R,3R)-tartrate(in) + succinate(out). Functionally, catalyzes the uptake of tartrate in exchange for intracellular succinate. Essential for anaerobic L-tartrate fermentation. The protein is L-tartrate/succinate antiporter of Escherichia coli (strain K12).